We begin with the raw amino-acid sequence, 654 residues long: Translation factor GUF1, mitochondrial (654 aa).

Residues 57 to 237 form the tr-type G domain; the sequence is ENYRNFSIVA…SVIKNIPSPV (181 aa). GTP contacts are provided by residues 66–73, 130–134, and 184–187; these read AHVDHGKS, DTPGH, and NKID.

Belongs to the TRAFAC class translation factor GTPase superfamily. Classic translation factor GTPase family. LepA subfamily.

The protein resides in the mitochondrion inner membrane. The enzyme catalyses GTP + H2O = GDP + phosphate + H(+). In terms of biological role, promotes mitochondrial protein synthesis. May act as a fidelity factor of the translation reaction, by catalyzing a one-codon backward translocation of tRNAs on improperly translocated ribosomes. Binds to mitochondrial ribosomes in a GTP-dependent manner. The polypeptide is Translation factor GUF1, mitochondrial (Candida albicans (strain SC5314 / ATCC MYA-2876) (Yeast)).